Here is a 230-residue protein sequence, read N- to C-terminus: 2-phytyl-1,4-naphtoquinone methyltransferase (230 aa).

Belongs to the class I-like SAM-binding methyltransferase superfamily. MenG/UbiE family.

The enzyme catalyses demethylphylloquinol + S-adenosyl-L-methionine = phylloquinol + S-adenosyl-L-homocysteine + H(+). It participates in cofactor biosynthesis; phylloquinone biosynthesis. Its function is as follows. Methyltransferase required for the conversion of 2-phytyl-1,4-beta-naphthoquinol to phylloquinol. The protein is 2-phytyl-1,4-naphtoquinone methyltransferase of Nostoc punctiforme (strain ATCC 29133 / PCC 73102).